We begin with the raw amino-acid sequence, 335 residues long: NAC domain-containing protein 87 (335 aa).

One can recognise an NAC domain in the interval 21 to 172 (LPPGFRFHPT…EWVVCRVFHK (152 aa)). A DNA-binding region spans residues 119 to 178 (VGMKKTLVFYRGRAPKGEKTNWVMHEYRLEGKYSYYNLPKSARDEWVVCRVFHKNNPSTT).

It is found in the nucleus. In terms of biological role, binds to the promoter regions of genes involved in chlorophyll catabolic processes, such as NYC1, SGR1, SGR2 and PAO. This is NAC domain-containing protein 87 from Arabidopsis thaliana (Mouse-ear cress).